Reading from the N-terminus, the 933-residue chain is Phosphoenolpyruvate carboxylase (933 aa).

Active-site residues include His-164 and Lys-595.

This sequence belongs to the PEPCase type 1 family. Requires Mg(2+) as cofactor.

The enzyme catalyses oxaloacetate + phosphate = phosphoenolpyruvate + hydrogencarbonate. Its function is as follows. Forms oxaloacetate, a four-carbon dicarboxylic acid source for the tricarboxylic acid cycle. This is Phosphoenolpyruvate carboxylase from Rhodopseudomonas palustris (strain BisB5).